The chain runs to 440 residues: Stromal membrane-associated protein 1 (440 aa).

One can recognise an Arf-GAP domain in the interval 18 to 143 (QLILSKLLRE…IAITNKEKEK (126 aa)). Residues 33–56 (CADCEAKGPRWASWNIGVFICIRC) form a C4-type zinc finger. 2 stretches are compositionally biased toward basic and acidic residues: residues 140-158 (EKEK…EKPA) and 165-178 (KLPK…EPKK). Disordered regions lie at residues 140–211 (EKEK…PATA) and 410–440 (NASA…QLWK). Residues 192–196 (LLGLD) carry the Interaction with clathrin heavy chains motif. Residues 420-440 (STTAGWSGSSSGQTLSTQLWK) are compositionally biased toward low complexity.

In terms of assembly, interacts with ARF6. Interacts with clathrin heavy chains via the clathrin box-like motif. Detected in adult brain, lung, heart, liver, ovary and bone marrow. Detected in stromal cells of the red pulp of adult spleen.

It is found in the cell membrane. Its function is as follows. GTPase activating protein that acts on ARF6. Plays a role in clathrin-dependent endocytosis. May play a role in erythropoiesis. In Mus musculus (Mouse), this protein is Stromal membrane-associated protein 1 (Smap1).